Consider the following 144-residue polypeptide: D-aminoacyl-tRNA deacylase (144 aa).

The short motif at Gly-137–Pro-138 is the Gly-cisPro motif, important for rejection of L-amino acids element.

It belongs to the DTD family. Homodimer.

Its subcellular location is the cytoplasm. It catalyses the reaction glycyl-tRNA(Ala) + H2O = tRNA(Ala) + glycine + H(+). It carries out the reaction a D-aminoacyl-tRNA + H2O = a tRNA + a D-alpha-amino acid + H(+). Functionally, an aminoacyl-tRNA editing enzyme that deacylates mischarged D-aminoacyl-tRNAs. Also deacylates mischarged glycyl-tRNA(Ala), protecting cells against glycine mischarging by AlaRS. Acts via tRNA-based rather than protein-based catalysis; rejects L-amino acids rather than detecting D-amino acids in the active site. By recycling D-aminoacyl-tRNA to D-amino acids and free tRNA molecules, this enzyme counteracts the toxicity associated with the formation of D-aminoacyl-tRNA entities in vivo and helps enforce protein L-homochirality. This chain is D-aminoacyl-tRNA deacylase, found in Acinetobacter baumannii (strain SDF).